The chain runs to 61 residues: Small ribosomal subunit protein uS14 (61 aa).

Residues Cys24, Cys27, Cys40, and Cys43 each contribute to the Zn(2+) site.

The protein belongs to the universal ribosomal protein uS14 family. Zinc-binding uS14 subfamily. Part of the 30S ribosomal subunit. Contacts proteins S3 and S10. Requires Zn(2+) as cofactor.

Functionally, binds 16S rRNA, required for the assembly of 30S particles and may also be responsible for determining the conformation of the 16S rRNA at the A site. The polypeptide is Small ribosomal subunit protein uS14 (Campylobacter lari (strain RM2100 / D67 / ATCC BAA-1060)).